The primary structure comprises 246 residues: MGPQHLSPMQLLCLLGAISSLPWAEALLCYEATSSLFRAVGLHRWQWFLLRSMVCKLNEGCEETLVFIEAGTRKGILGFKGCSPASSYPPQVSYLVSPPGLSIASYSRVCRTYLCNNLTNMNAILHLKARTPKTLKSSSHSCPTCVGEHSKSCLPNFVSSESCPRDATKCYSSTVKFQAGFLNTTFLLMGCAREHTSVFAHFHHIGSIRVTEVINIVEKALFTGAGTPCRSPSWGILLGLLFAFKG.

The N-terminal stretch at 1-26 is a signal peptide; that stretch reads MGPQHLSPMQLLCLLGAISSLPWAEA. Asparagine 117 carries an N-linked (GlcNAc...) asparagine glycan. The UPAR/Ly6 domain maps to 142-223; the sequence is CPTCVGEHSK…INIVEKALFT (82 aa). Residue alanine 225 is the site of GPI-anchor amidated alanine attachment. Residues 226–246 constitute a propeptide, removed in mature form; sequence GTPCRSPSWGILLGLLFAFKG.

The protein resides in the cell membrane. In Bos taurus (Bovine), this protein is Ly6/PLAUR domain-containing protein 4 (LYPD4).